The following is a 374-amino-acid chain: Alanine racemase (374 aa).

K40 functions as the Proton acceptor; specific for D-alanine in the catalytic mechanism. An N6-(pyridoxal phosphate)lysine modification is found at K40. Residue R136 participates in substrate binding. The active-site Proton acceptor; specific for L-alanine is the Y264. A substrate-binding site is contributed by M311.

The protein belongs to the alanine racemase family. It depends on pyridoxal 5'-phosphate as a cofactor.

It carries out the reaction L-alanine = D-alanine. It participates in amino-acid biosynthesis; D-alanine biosynthesis; D-alanine from L-alanine: step 1/1. Functionally, catalyzes the interconversion of L-alanine and D-alanine. May also act on other amino acids. The protein is Alanine racemase (alr) of Pediococcus pentosaceus (strain ATCC 25745 / CCUG 21536 / LMG 10740 / 183-1w).